Consider the following 217-residue polypeptide: Probable septum site-determining protein MinC (217 aa).

Belongs to the MinC family. Interacts with MinD and FtsZ.

In terms of biological role, cell division inhibitor that blocks the formation of polar Z ring septums. Rapidly oscillates between the poles of the cell to destabilize FtsZ filaments that have formed before they mature into polar Z rings. Prevents FtsZ polymerization. This Pelotomaculum thermopropionicum (strain DSM 13744 / JCM 10971 / SI) protein is Probable septum site-determining protein MinC.